The sequence spans 437 residues: Na(+)/H(+) antiporter NhaA (437 aa).

Helical transmembrane passes span 29 to 49 (TAGIILLLSTLLALGLANTAW), 74 to 94 (LKHWINDGLMTFFFFVIALEL), 111 to 131 (LPVAAALGGMAAPAGIYLLLV), 139 to 159 (GWGTVMSTDTAFVIGCLALLG), 168 to 188 (LFLLSLAIFDDIGAILIVAVG), 196 to 216 (VALGTGGLGFAFVAGIALLGI), 229 to 249 (IWLAFDASGVHATLVGVILGL), 307 to 327 (IALHPWVAFAIMPLFAVSNAG), 341 to 361 (IAIVVAFVVGKPAGIVLFSFL), 376 to 396 (WSLLAAGSLLTGIGFTMALFI), and 411 to 431 (LGVLGASVISAALGFMALTLL).

It belongs to the NhaA Na(+)/H(+) (TC 2.A.33) antiporter family.

The protein localises to the cell inner membrane. The enzyme catalyses Na(+)(in) + 2 H(+)(out) = Na(+)(out) + 2 H(+)(in). Functionally, na(+)/H(+) antiporter that extrudes sodium in exchange for external protons. The protein is Na(+)/H(+) antiporter NhaA of Rhizobium meliloti (strain 1021) (Ensifer meliloti).